The sequence spans 72 residues: Translation initiation factor IF-1 (72 aa).

An S1-like domain is found at 1 to 72; that stretch reads MSKEDSFEME…SKGRITYRAR (72 aa).

This sequence belongs to the IF-1 family. In terms of assembly, component of the 30S ribosomal translation pre-initiation complex which assembles on the 30S ribosome in the order IF-2 and IF-3, IF-1 and N-formylmethionyl-tRNA(fMet); mRNA recruitment can occur at any time during PIC assembly.

The protein localises to the cytoplasm. Functionally, one of the essential components for the initiation of protein synthesis. Stabilizes the binding of IF-2 and IF-3 on the 30S subunit to which N-formylmethionyl-tRNA(fMet) subsequently binds. Helps modulate mRNA selection, yielding the 30S pre-initiation complex (PIC). Upon addition of the 50S ribosomal subunit IF-1, IF-2 and IF-3 are released leaving the mature 70S translation initiation complex. The chain is Translation initiation factor IF-1 from Pseudomonas syringae pv. tomato (strain ATCC BAA-871 / DC3000).